We begin with the raw amino-acid sequence, 268 residues long: MSRFETQFATLNAKNEGAFVPFVTLCDPTFDRSFEIICTLVDNGADALELGFPFSDPLLDGPVIQAANNRALTAGHSSEDSLKLLEKVRSKYPEIPISLLLCANLIFAKGLDAFYQRCAEVGVDAVLVADIPLLAKGDYVQTAKKHGIQPVFICPPNADEKTIQGVAKNSEGYTYLVSRAGVTSAENQAHAANLDTLVEKLKAHNAPPILQGFGIAQPEQVKEALSLGTAGAISGSATVKIIERNLDNHEQCLAELAEFVQTMKAATK.

Active-site proton acceptor residues include glutamate 49 and aspartate 60.

This sequence belongs to the TrpA family. In terms of assembly, tetramer of two alpha and two beta chains.

The enzyme catalyses (1S,2R)-1-C-(indol-3-yl)glycerol 3-phosphate + L-serine = D-glyceraldehyde 3-phosphate + L-tryptophan + H2O. The protein operates within amino-acid biosynthesis; L-tryptophan biosynthesis; L-tryptophan from chorismate: step 5/5. Functionally, the alpha subunit is responsible for the aldol cleavage of indoleglycerol phosphate to indole and glyceraldehyde 3-phosphate. The sequence is that of Tryptophan synthase alpha chain from Haemophilus influenzae (strain ATCC 51907 / DSM 11121 / KW20 / Rd).